We begin with the raw amino-acid sequence, 1343 residues long: uncharacterized protein (1343 aa).

The chain crosses the membrane as a helical span at residues 432–449 (LYVYFVTTKTGVVAFSLL).

It belongs to the IIV-6 295L family.

Its subcellular location is the membrane. This is an uncharacterized protein from Acheta domesticus (House cricket).